Consider the following 390-residue polypeptide: Glucose-fructose oxidoreductase domain-containing protein 1 (390 aa).

The N-terminal stretch at 1 to 21 (MLPGVGVFGTSLTARVIIPLL) is a signal peptide.

The protein belongs to the Gfo/Idh/MocA family. As to quaternary structure, homodimer. Interacts with NKIRAS2.

Its subcellular location is the secreted. Its function is as follows. Probably catalytically inactive enzyme. Does not bind NAD or NADP. The sequence is that of Glucose-fructose oxidoreductase domain-containing protein 1 (Gfod1) from Mus musculus (Mouse).